Here is a 269-residue protein sequence, read N- to C-terminus: Undecaprenyl-diphosphatase (269 aa).

7 helical membrane-spanning segments follow: residues Trp-42 to Phe-62, Leu-83 to Ile-103, Pro-110 to Val-130, Gly-142 to Leu-162, Ala-186 to Leu-206, Ala-219 to Ile-239, and Phe-247 to Ile-267.

This sequence belongs to the UppP family.

The protein localises to the cell inner membrane. The catalysed reaction is di-trans,octa-cis-undecaprenyl diphosphate + H2O = di-trans,octa-cis-undecaprenyl phosphate + phosphate + H(+). In terms of biological role, catalyzes the dephosphorylation of undecaprenyl diphosphate (UPP). Confers resistance to bacitracin. In Caulobacter sp. (strain K31), this protein is Undecaprenyl-diphosphatase.